The chain runs to 269 residues: Proline-rich protein 7 (269 aa).

The Extracellular segment spans residues 1–9; that stretch reads MVMSQGTYT. A required for interaction with NMDA receptors region spans residues 1–44; that stretch reads MVMSQGTYTFLTCFAGFWLIWGLIVLLCCFCSFLRRRLKRRQEE. The tract at residues 2-39 is required for membrane localization; sequence VMSQGTYTFLTCFAGFWLIWGLIVLLCCFCSFLRRRLK. The helical; Signal-anchor for type III membrane protein transmembrane segment at 10-30 threads the bilayer; that stretch reads FLTCFAGFWLIWGLIVLLCCF. The Cytoplasmic segment spans residues 31 to 269; that stretch reads CSFLRRRLKR…IPLFGRTTAV (239 aa). 2 disordered regions span residues 63-83 and 97-121; these read GSLAGSPPGLAPPPPPHRSRL and PLLHHGPAPPHAHPHPHHHALPHPP. The residue at position 64 (Ser64) is a Phosphoserine. Residues 108-117 are compositionally biased toward basic residues; the sequence is AHPHPHHHAL. Positions 146 to 166 are required for internalization; that stretch reads PCYEEAVLMAEPPPPYSEVLT. A required for apoptosis induction region spans residues 146-269; that stretch reads PCYEEAVLMA…IPLFGRTTAV (124 aa). The PDZ-binding motif lies at 267-269; it reads TAV.

Forms a complex with NMDA receptor zeta subunit GRIN1 and epsilon subunit GRIN2B. Interacts with GRIN2B. Interacts with GRIN1; the interaction is reduced upon NMDA receptor activity. Found in a postsynaptic membrane complex with DLG4 and GRIN1. Interacts with DLG4 (via PDZ3 domain and to lesser degree via PDZ2 domain). Interacts with JUN. Found in a complex with JUN and FBXW7. Interacts with JUN and FBXW7; the interaction inhibits ubiquitination-mediated JUN degradation promoting its phosphorylation and transcriptional activity. Interacts with SRC. Palmitoylated. In terms of processing, tyrosine phosphorylated, possibly by SRC. As to expression, highly expressed in brain, moderately expressed in lymph nodes and T cells and low expression in thymus and spleen. Expressed in single positive progenitor thymocytes, particularly in CD8 single positive thymocytes.

It is found in the cell membrane. The protein resides in the postsynaptic cell membrane. The protein localises to the postsynaptic density membrane. Its subcellular location is the cytoplasm. It localises to the perinuclear region. It is found in the synapse. The protein resides in the cell projection. The protein localises to the dendrite. Its subcellular location is the nucleus. Functionally, acts as a synapse-to-nucleus messenger to promote NMDA receptor-mediated excitotoxicity in neurons in a JUN-dependent manner. Inhibits ubiquitination-mediated degradation and promotes phosphorylation and transcriptional activity of transcription factor JUN. Might play a redundant role in the regulation of T cell receptor signaling. Might promote apoptosis in T cells. This is Proline-rich protein 7 (Prr7) from Mus musculus (Mouse).